The chain runs to 537 residues: Probable protein kinase UbiB (537 aa).

A helical membrane pass occupies residues 24 to 44 (LLFEQPLLPWWLASLRLLMPW). Residues 126–494 (RFDVEPLASA…RRRQGDNWAL (369 aa)) enclose the Protein kinase domain. ATP-binding positions include 132 to 140 (LASASVAQV) and lysine 154. Residue aspartate 289 is the Proton acceptor of the active site. Helical transmembrane passes span 493–513 (ALRLLGAGLLGGGATLAAGAV) and 515–535 (LSAPAAWPAWLMLAAGLYLIV).

Belongs to the ABC1 family. UbiB subfamily.

The protein resides in the cell inner membrane. The protein operates within cofactor biosynthesis; ubiquinone biosynthesis [regulation]. In terms of biological role, is probably a protein kinase regulator of UbiI activity which is involved in aerobic coenzyme Q (ubiquinone) biosynthesis. This Pseudomonas entomophila (strain L48) protein is Probable protein kinase UbiB.